A 637-amino-acid chain; its full sequence is ATP-dependent rRNA helicase SPB4 (637 aa).

Residues 14 to 42 (WDTLNPPLSEWIRDAVATMGFDQMTPVQA) carry the Q motif motif. The Helicase ATP-binding domain maps to 45-247 (LPHFMGNKDV…RVGLRNPVKI (203 aa)). 58–65 (AVTGSGKT) provides a ligand contact to ATP. The DEAD box motif lies at 195–198 (DEAD). Residues 283–438 (ALAELLRQLP…TITTSEDDAA (156 aa)) enclose the Helicase C-terminal domain. Residues 524–631 (KEKTREQQRK…AAAKQEKDGE (108 aa)) are a coiled coil. Basic and acidic residues-rich tracts occupy residues 535-553 (ALEEEKSGVKKQDKSEEFK), 563-576 (SAKHEKEDDRVERR), 583-618 (RDAEATSKMTDDEKVKQMELNDLIAEVRRQNREKAA), and 625-637 (KQEKDGEFKGFDD). The disordered stretch occupies residues 535 to 637 (ALEEEKSGVK…KDGEFKGFDD (103 aa)).

Belongs to the DEAD box helicase family. DDX55/SPB4 subfamily. Component of pre-60S ribosomal complexes.

It localises to the nucleus. Its subcellular location is the nucleolus. The catalysed reaction is ATP + H2O = ADP + phosphate + H(+). Functionally, ATP-binding RNA helicase involved in the biogenesis of 60S ribosomal subunits. Binds 90S pre-ribosomal particles and dissociates from pre-60S ribosomal particles after processing of 27SB pre-rRNA. Required for the normal formation of 18S rRNA through the processing of pre-rRNAs at sites A0, A1 and A2, and the normal formation of 25S and 5.8S rRNAs through the processing of pre-rRNAs at sites C1 and C2. In Gibberella zeae (strain ATCC MYA-4620 / CBS 123657 / FGSC 9075 / NRRL 31084 / PH-1) (Wheat head blight fungus), this protein is ATP-dependent rRNA helicase SPB4.